The sequence spans 618 residues: Poly(A)-specific ribonuclease PARN-like (618 aa).

A divalent metal cation is bound by residues Ser-54, Gln-56, Asp-332, and Asn-418. Residues 588 to 607 (ALESSDTDPDSDTKPSEIDW) form a disordered region.

It belongs to the CAF1 family. Requires a divalent metal cation as cofactor.

It localises to the nucleus. The protein localises to the cytoplasm. The catalysed reaction is Exonucleolytic cleavage of poly(A) to 5'-AMP.. 3'-exoribonuclease that has a preference for poly(A) tails of mRNAs, thereby efficiently degrading poly(A) tails. Exonucleolytic degradation of the poly(A) tail is often the first step in the decay of eukaryotic mRNAs. The sequence is that of Poly(A)-specific ribonuclease PARN-like from Arabidopsis thaliana (Mouse-ear cress).